An 82-amino-acid polypeptide reads, in one-letter code: Small ribosomal subunit protein bS18 (82 aa).

The interval 1-20 is disordered; it reads MSEASSAPVRRPFHRRRKTC.

It belongs to the bacterial ribosomal protein bS18 family. Part of the 30S ribosomal subunit. Forms a tight heterodimer with protein bS6.

Binds as a heterodimer with protein bS6 to the central domain of the 16S rRNA, where it helps stabilize the platform of the 30S subunit. The protein is Small ribosomal subunit protein bS18 of Rhizobium etli (strain CIAT 652).